A 1254-amino-acid polypeptide reads, in one-letter code: Zinc finger protein BRUTUS (1254 aa).

The interval 1–40 is disordered; it reads MATPLPDFETARGGGAVASSSTTVLPSSVSSSSSSSRPLP. The span at 19-40 shows a compositional bias: low complexity; the sequence is SSSTTVLPSSVSSSSSSSRPLP. A helical transmembrane segment spans residues 201 to 221; it reads FLCSIPVNMLAVFLPWISSSI. Positions 893 to 913 are disordered; it reads GSPDSSSTETSKPSPQKDNDH. Polar residues predominate over residues 895–906; the sequence is PDSSSTETSKPS. A CHY-type zinc finger spans residues 999-1068; the sequence is PEKQIYGCEH…PICTTPSCDG (70 aa). Zn(2+) is bound by residues Cys-1006, His-1008, Cys-1019, Cys-1020, Cys-1026, Cys-1029, His-1030, His-1036, Cys-1048, Cys-1051, Cys-1061, Cys-1066, Cys-1076, Cys-1079, His-1090, Cys-1091, Cys-1094, Cys-1097, His-1109, Cys-1110, Cys-1113, Cys-1116, His-1124, and Cys-1126. A CTCHY-type zinc finger spans residues 1071-1134; it reads MAKHYCSICK…KCLEKSLETN (64 aa). Residues 1135 to 1176 form an RING-type; atypical zinc finger; it reads CPICCEFLFTSSEAVRALPCGHYMHSACFQAYTCSHYTCPIC.

Interacts with the PYEL proteins bHLH115, bHLH104 and ILR3 in the nucleus. Binds zinc and iron ions. As to expression, expressed in cotyledons of seedlings, young leaves, developing and mature embryos, and other reproductive tissues including floral vasculature, funiculus, septum, and gynoecium valves.

The protein localises to the membrane. It is found in the nucleus. The protein operates within protein modification; protein ubiquitination. Its function is as follows. Essential protein. Negatively regulates the response to iron deficiency and thus contributes to iron homeostasis. Exhibits E3 ubiquitin-protein ligase activity in vitro. Plays a role in root growth, rhizosphere acidification, and iron reductase activity in response to iron deprivation. Facilitates 26S proteasome-mediated degradation of PYEL proteins in the absence of iron. The polypeptide is Zinc finger protein BRUTUS (Arabidopsis thaliana (Mouse-ear cress)).